The primary structure comprises 686 residues: Soluble guanylate cyclase gcy-34 (686 aa).

Histidine 105 provides a ligand contact to heme. Coiled-coil stretches lie at residues 306–335 (KKHM…ELTQ) and 398–432 (VEVN…LKDM). The 129-residue stretch at 455–583 (TVMFCDLPAF…ETVTLASQME (129 aa)) folds into the Guanylate cyclase domain. Mg(2+) contacts are provided by aspartate 460 and aspartate 504.

This sequence belongs to the adenylyl cyclase class-4/guanylyl cyclase family. As to quaternary structure, heterodimer; with other soluble guanylate cyclases. Heme is required as a cofactor. In terms of tissue distribution, expressed in a small number of neurons, corresponding to URX, AQR and PQR neurons.

Its subcellular location is the cytoplasm. The catalysed reaction is GTP = 3',5'-cyclic GMP + diphosphate. May be regulated by molecular oxygen. Probably not activated by nitric oxide (NO). Synthesizes cyclic GMP (cGMP) from GTP. May be involved in sensitivity to quinine by regulating egl-4 activity through the production of cGMP. This chain is Soluble guanylate cyclase gcy-34 (gcy-34), found in Caenorhabditis elegans.